Reading from the N-terminus, the 139-residue chain is Phosphoribosyl-AMP cyclohydrolase (139 aa).

Asp-95 is a binding site for Mg(2+). Residue Cys-96 participates in Zn(2+) binding. 2 residues coordinate Mg(2+): Asp-97 and Asp-99. Residues Cys-114 and Cys-121 each contribute to the Zn(2+) site.

This sequence belongs to the PRA-CH family. As to quaternary structure, homodimer. The cofactor is Mg(2+). Zn(2+) is required as a cofactor.

The protein localises to the cytoplasm. It carries out the reaction 1-(5-phospho-beta-D-ribosyl)-5'-AMP + H2O = 1-(5-phospho-beta-D-ribosyl)-5-[(5-phospho-beta-D-ribosylamino)methylideneamino]imidazole-4-carboxamide. The protein operates within amino-acid biosynthesis; L-histidine biosynthesis; L-histidine from 5-phospho-alpha-D-ribose 1-diphosphate: step 3/9. Functionally, catalyzes the hydrolysis of the adenine ring of phosphoribosyl-AMP. This Chelativorans sp. (strain BNC1) protein is Phosphoribosyl-AMP cyclohydrolase.